The primary structure comprises 62 residues: Large ribosomal subunit protein bL33 (62 aa).

The protein belongs to the bacterial ribosomal protein bL33 family.

This Phocaeicola vulgatus (strain ATCC 8482 / DSM 1447 / JCM 5826 / CCUG 4940 / NBRC 14291 / NCTC 11154) (Bacteroides vulgatus) protein is Large ribosomal subunit protein bL33.